Consider the following 165-residue polypeptide: NADPH-dependent 7-cyano-7-deazaguanine reductase (165 aa).

The Thioimide intermediate role is filled by C56. D63 functions as the Proton donor in the catalytic mechanism. Substrate is bound by residues 78 to 80 (VES) and 97 to 98 (HE).

The protein belongs to the GTP cyclohydrolase I family. QueF type 1 subfamily.

It is found in the cytoplasm. It catalyses the reaction 7-aminomethyl-7-carbaguanine + 2 NADP(+) = 7-cyano-7-deazaguanine + 2 NADPH + 3 H(+). It participates in tRNA modification; tRNA-queuosine biosynthesis. Functionally, catalyzes the NADPH-dependent reduction of 7-cyano-7-deazaguanine (preQ0) to 7-aminomethyl-7-deazaguanine (preQ1). This chain is NADPH-dependent 7-cyano-7-deazaguanine reductase, found in Geobacillus thermodenitrificans (strain NG80-2).